The sequence spans 123 residues: Small ribosomal subunit protein uS12c (123 aa).

The protein belongs to the universal ribosomal protein uS12 family. As to quaternary structure, part of the 30S ribosomal subunit.

The protein resides in the plastid. It is found in the chloroplast. With S4 and S5 plays an important role in translational accuracy. Located at the interface of the 30S and 50S subunits. The chain is Small ribosomal subunit protein uS12c (rps12) from Pinus thunbergii (Japanese black pine).